The chain runs to 862 residues: uncharacterized protein (862 aa).

Disordered regions lie at residues 45–91 (HPPV…PDEV), 633–824 (RAEQ…GDDD), and 837–862 (GGSGFLTSTAGRNRKSNKQSKTLLLS). Acidic residues-rich tracts occupy residues 57-69 (MDVDAESEDEKDE) and 78-91 (PEVESEADEDPDEV). Basic and acidic residues-rich tracts occupy residues 633-650 (RAEQKASKESAKGEDAAK), 657-686 (REAEAGTETPKKKQKEEKSEKPKKTGKAEK), and 694-703 (TKKEKTEKKT). Residues 751 to 760 (EKKKRTAAKK) show a composition bias toward basic residues. Over residues 761–779 (KTVDRPSGHRPSSKKEYRS) the composition is skewed to basic and acidic residues.

This is an uncharacterized protein from Ictaluridae (bullhead catfishes).